A 373-amino-acid polypeptide reads, in one-letter code: Alanine racemase (373 aa).

K40 serves as the catalytic Proton acceptor; specific for D-alanine. Position 40 is an N6-(pyridoxal phosphate)lysine (K40). R140 serves as a coordination point for substrate. Catalysis depends on Y268, which acts as the Proton acceptor; specific for L-alanine. A substrate-binding site is contributed by M315.

This sequence belongs to the alanine racemase family. Pyridoxal 5'-phosphate serves as cofactor.

It catalyses the reaction L-alanine = D-alanine. Its pathway is amino-acid biosynthesis; D-alanine biosynthesis; D-alanine from L-alanine: step 1/1. In terms of biological role, catalyzes the interconversion of L-alanine and D-alanine. May also act on other amino acids. The chain is Alanine racemase (alr) from Levilactobacillus brevis (strain ATCC 367 / BCRC 12310 / CIP 105137 / JCM 1170 / LMG 11437 / NCIMB 947 / NCTC 947) (Lactobacillus brevis).